The primary structure comprises 334 residues: Phosphatidylglycerol--prolipoprotein diacylglyceryl transferase (334 aa).

4 helical membrane passes run 22 to 42, 54 to 74, 105 to 125, and 131 to 151; these read FLPFRIQTYALIILTGIVVAA, AEPGVVLDVLLWAVPLGIIGA, IWEGGNAIFGALIGGAVGVGI, and GLRFWTFADALAPALLLAQAI. Position 153 (arginine 153) interacts with a 1,2-diacyl-sn-glycero-3-phospho-(1'-sn-glycerol). 2 consecutive transmembrane segments (helical) span residues 191–211 and 251–271; these read LFQPLFLYEIVWNVIGVFVIL and FLGIPSNVWAAFAAVVLGAII. A disordered region spans residues 296–334; that stretch reads PQAEVESGETDPEEILHADDDEERTGTHKPQATSLSGSN. A compositionally biased stretch (acidic residues) spans 301 to 318; it reads ESGETDPEEILHADDDEE. Polar residues predominate over residues 323–334; that stretch reads HKPQATSLSGSN.

This sequence belongs to the Lgt family.

The protein resides in the cell membrane. It catalyses the reaction L-cysteinyl-[prolipoprotein] + a 1,2-diacyl-sn-glycero-3-phospho-(1'-sn-glycerol) = an S-1,2-diacyl-sn-glyceryl-L-cysteinyl-[prolipoprotein] + sn-glycerol 1-phosphate + H(+). Its pathway is protein modification; lipoprotein biosynthesis (diacylglyceryl transfer). Its function is as follows. Catalyzes the transfer of the diacylglyceryl group from phosphatidylglycerol to the sulfhydryl group of the N-terminal cysteine of a prolipoprotein, the first step in the formation of mature lipoproteins. This is Phosphatidylglycerol--prolipoprotein diacylglyceryl transferase from Leifsonia xyli subsp. xyli (strain CTCB07).